The chain runs to 78 residues: Metallothionein-like protein type 2 (78 aa).

The protein belongs to the metallothionein superfamily. Type 15 family.

Its function is as follows. Metallothioneins have a high content of cysteine residues that bind various heavy metals. The sequence is that of Metallothionein-like protein type 2 from Nicotiana glutinosa (Tobacco).